Here is a 295-residue protein sequence, read N- to C-terminus: Probable endonuclease lcl3 (295 aa).

The tract at residues 1 to 35 (MRWPPWASDSQAQQQTAKHDEHDERQAAAKSTTTS) is disordered. Positions 17 to 27 (AKHDEHDERQA) are enriched in basic and acidic residues. The chain crosses the membrane as a helical span at residues 52 to 74 (FTEARTIIPTLILTSGFLGAFYI). The TNase-like domain maps to 96–263 (RSLLGQVTSV…KLRGVGLWKD (168 aa)). The active site involves arginine 147. Ca(2+) is bound at residue aspartate 152. Active-site residues include glutamate 155 and arginine 195.

It belongs to the LCL3 family.

The protein resides in the mitochondrion. It localises to the membrane. This Neosartorya fischeri (strain ATCC 1020 / DSM 3700 / CBS 544.65 / FGSC A1164 / JCM 1740 / NRRL 181 / WB 181) (Aspergillus fischerianus) protein is Probable endonuclease lcl3 (lcl3).